A 273-amino-acid polypeptide reads, in one-letter code: Undecaprenyl-diphosphatase (273 aa).

7 helical membrane-spanning segments follow: residues 6–26 (SLLIAAILGVVEGLTEFLPVS), 45–65 (AKTFEVVIQLGSILAVVVMFW), 90–110 (LTLIHILLGMIPAVVLGLVFH), 116–136 (LFNPINVMYALVVGGLLLIAA), 190–210 (YAASEFSFLLAVPMMMGATVL), 222–242 (ADIPMFAVGFVTAFVVALIAI), and 252–272 (ISFIPFAIYRFVVAAAVYVVF).

The protein belongs to the UppP family.

The protein localises to the cell inner membrane. The enzyme catalyses di-trans,octa-cis-undecaprenyl diphosphate + H2O = di-trans,octa-cis-undecaprenyl phosphate + phosphate + H(+). Functionally, catalyzes the dephosphorylation of undecaprenyl diphosphate (UPP). Confers resistance to bacitracin. The protein is Undecaprenyl-diphosphatase of Salmonella heidelberg (strain SL476).